Here is a 320-residue protein sequence, read N- to C-terminus: Cytochrome f (320 aa).

The N-terminal stretch at 1–36 (MKLNSLINLIQKSIYSCTLLLTILNIICIAPNSSNA) is a signal peptide. Phe-37, Cys-57, Cys-60, and His-61 together coordinate heme. A helical membrane pass occupies residues 286 to 305 (IKGMIAFFFVSVLAQIFFVL).

It belongs to the cytochrome f family. As to quaternary structure, the 4 large subunits of the cytochrome b6-f complex are cytochrome b6, subunit IV (17 kDa polypeptide, petD), cytochrome f and the Rieske protein, while the 4 small subunits are PetG, PetL, PetM and PetN. The complex functions as a dimer. It depends on heme as a cofactor.

It localises to the plastid. The protein resides in the chloroplast thylakoid membrane. Its function is as follows. Component of the cytochrome b6-f complex, which mediates electron transfer between photosystem II (PSII) and photosystem I (PSI), cyclic electron flow around PSI, and state transitions. The sequence is that of Cytochrome f (petA) from Porphyra purpurea (Red seaweed).